Here is a 615-residue protein sequence, read N- to C-terminus: 1-deoxy-D-xylulose-5-phosphate synthase (615 aa).

Thiamine diphosphate-binding positions include histidine 72 and 111 to 113; that span reads GHS. Aspartate 142 lines the Mg(2+) pocket. Residues 143–144, asparagine 171, tyrosine 278, and glutamate 360 each bind thiamine diphosphate; that span reads GA. Asparagine 171 lines the Mg(2+) pocket.

It belongs to the transketolase family. DXPS subfamily. Homodimer. Mg(2+) is required as a cofactor. Requires thiamine diphosphate as cofactor.

The enzyme catalyses D-glyceraldehyde 3-phosphate + pyruvate + H(+) = 1-deoxy-D-xylulose 5-phosphate + CO2. It participates in metabolic intermediate biosynthesis; 1-deoxy-D-xylulose 5-phosphate biosynthesis; 1-deoxy-D-xylulose 5-phosphate from D-glyceraldehyde 3-phosphate and pyruvate: step 1/1. Its function is as follows. Catalyzes the acyloin condensation reaction between C atoms 2 and 3 of pyruvate and glyceraldehyde 3-phosphate to yield 1-deoxy-D-xylulose-5-phosphate (DXP). The sequence is that of 1-deoxy-D-xylulose-5-phosphate synthase from Campylobacter jejuni subsp. jejuni serotype O:6 (strain 81116 / NCTC 11828).